Consider the following 473-residue polypeptide: Cephalotoxin-like protein (473 aa).

The first 21 residues, 1–21 (RWLGWQKFCWISCLFSSISSG), serve as a signal peptide directing secretion. 2 coiled-coil regions span residues 40 to 60 (AINAINEEYIAQAKAIEEALK) and 116 to 147 (LINERFNEVNAKLDRIDEKLDEMEKSIKADTA).

As to expression, component of the acid-insoluble and acid-soluble organic matrix of the aragonitic skeleton (at protein level).

Its subcellular location is the secreted. The protein is Cephalotoxin-like protein of Acropora millepora (Staghorn coral).